Here is a 1067-residue protein sequence, read N- to C-terminus: MGVTQPAAPAYLRFPHPHGELVAFTAEDDVWLAPLDGGRAWRVSADNVPVNHPRISPDGTKVAWTSTRDGAPEVHVAPVEGGPAKRLTHWGSIRTQVRGWTADGRVLALSTYGQASLRRSWARALPLDGGPATTLPYGPVGDVAQGPHTVLLSAPMGREAAWWKRYRGGTAGKLWIDREDDGEFVRLHDGLDGNIEYPFWVGDRIAFLSDHEGTGALYSSLADGSDLRRHTPVDGFYARHAATDGSRVVYASAGELWTLDDLDGAEPRRLDIRLGGARVDLQSYPVNAARWFGSASPDHTARGSAVAVRGGVHWVTHRSGPARALAATPGVRNRLPRTFRVDGEEWVVWVTDAEGDDALEFAPATGLAPGATARRLAAGQLGRVLHLAVAPDGSRVAVASHDGRVLLVERESGEVREVDRSEDGDASGLVFSPDSSWLAWSHPGPEPLRQLKLANTTDLSVSEATPLRFKDYSPAFTLDGKHLAFLSTRSFDPVYDEHVFDLAFVEGARPYLITLAATTPSPFGPQRHGRPFETPDREETPDSEGTPTTRIDIEGLADRIVPFPVEAARYSRLRAAKDGVLWLRHPLTGVLGASRANPEDPDPNTELERYDLAQQRVEHLGGDADHFEVSGDGKRVLLWTDGRLKVVPSDRRASGDEDSDTNITVDLGRVRQTVEPAAEWRQMFDETGRIMRDHYWRADMNGVDWDGVLDRYRPVLDRVATHDDLVDLLWEVHGELGTSHAYVTPRGGHGSGARQGLLGADLSRHEDGAWRIDRVLPSETSDPDARSPLAAPGVAVRAGDAIVAVAGQAVDPVTGPGPLLVGTAGKPVELTVSPSGGGEVRHAVVVPLADEEPLRYHAWVADRRAYVHEKSGGRLGYLHVPDMQAPGWAQIHRDLRVEVAREGLVVDVRENRGGHTSQLVVEKLARRIVGWDLPRGMRPTSYPQDAPRGPVVAVANEFSGSDGDIVNAAIKALGIGPVVGVRTWGGVIGIDSRYRLVDGTLITQPKYAFWLEGYGWGVENHGVDPDVEVPQRPQDHAAGRDPQLDEAIALALAALEETPAKTPPSLP.

The interval Thr-518 to Ile-551 is disordered. A compositionally biased stretch (basic and acidic residues) spans Arg-530 to Thr-540. Residue His-740 is the Charge relay system of the active site. A PDZ-like region spans residues Arg-754–Glu-851. Gly-914 provides a ligand contact to substrate. The active-site Nucleophile is the Ser-961. The active-site Charge relay system is Glu-1019.

It belongs to the peptidase S41B family. As to quaternary structure, forms a homohexameric complex; it is not known if it assembles into higher-order structures.

It is found in the cytoplasm. Its activity is regulated as follows. Stimulated by MgCl2. In terms of biological role, degrades oligopeptides in a sequential manner. This is Tricorn protease homolog 1 (tri1) from Streptomyces coelicolor (strain ATCC BAA-471 / A3(2) / M145).